Here is a 152-residue protein sequence, read N- to C-terminus: Large ribosomal subunit protein uL15 (152 aa).

A disordered region spans residues 1-56 (MTSTLNTLKSNLGSRKKKLRKGRGIAAGQGASCGFGMRGQKSRSGRPTRPGFEGGQ). Residues 14–23 (SRKKKLRKGR) are compositionally biased toward basic residues. Residues 25–37 (IAAGQGASCGFGM) are compositionally biased toward gly residues.

It belongs to the universal ribosomal protein uL15 family. Part of the 50S ribosomal subunit.

Its function is as follows. Binds to the 23S rRNA. The sequence is that of Large ribosomal subunit protein uL15 from Prochlorococcus marinus (strain MIT 9515).